We begin with the raw amino-acid sequence, 1099 residues long: Carbamoyl phosphate synthase large chain (1099 aa).

A carboxyphosphate synthetic domain region spans residues 1 to 402 (MPKREDIKRI…ALGKALRSLE (402 aa)). Residues R129, R169, G175, G176, E208, V210, E215, G241, I242, H243, Q285, and E299 each contribute to the ATP site. Positions 133 to 328 (KETMEKAGLE…IAKVAALLAV (196 aa)) constitute an ATP-grasp 1 domain. 3 residues coordinate Mg(2+): Q285, E299, and N301. The Mn(2+) site is built by Q285, E299, and N301. The interval 403–541 (LDAAPKLDLE…STYNGVENEA (139 aa)) is oligomerization domain. Residues 542–944 (VPSDREKIMI…AFAKAQIAAG (403 aa)) form a carbamoyl phosphate synthetic domain region. In terms of domain architecture, ATP-grasp 2 spans 666 to 857 (AKLLKQIGLK…VARIAAKIMV (192 aa)). ATP-binding residues include R702, K741, L743, E748, G773, V774, H775, S776, Q816, and E828. 3 residues coordinate Mg(2+): Q816, E828, and N830. The Mn(2+) site is built by Q816, E828, and N830. An MGS-like domain is found at 945–1099 (NPLPTTGAIL…VRRLTDTWKM (155 aa)). An allosteric domain region spans residues 945-1099 (NPLPTTGAIL…VRRLTDTWKM (155 aa)).

This sequence belongs to the CarB family. In terms of assembly, composed of two chains; the small (or glutamine) chain promotes the hydrolysis of glutamine to ammonia, which is used by the large (or ammonia) chain to synthesize carbamoyl phosphate. Tetramer of heterodimers (alpha,beta)4. Mg(2+) serves as cofactor. It depends on Mn(2+) as a cofactor.

It carries out the reaction hydrogencarbonate + L-glutamine + 2 ATP + H2O = carbamoyl phosphate + L-glutamate + 2 ADP + phosphate + 2 H(+). The catalysed reaction is hydrogencarbonate + NH4(+) + 2 ATP = carbamoyl phosphate + 2 ADP + phosphate + 2 H(+). It participates in amino-acid biosynthesis; L-arginine biosynthesis; carbamoyl phosphate from bicarbonate: step 1/1. The protein operates within pyrimidine metabolism; UMP biosynthesis via de novo pathway; (S)-dihydroorotate from bicarbonate: step 1/3. Its function is as follows. Large subunit of the glutamine-dependent carbamoyl phosphate synthetase (CPSase). CPSase catalyzes the formation of carbamoyl phosphate from the ammonia moiety of glutamine, carbonate, and phosphate donated by ATP, constituting the first step of 2 biosynthetic pathways, one leading to arginine and/or urea and the other to pyrimidine nucleotides. The large subunit (synthetase) binds the substrates ammonia (free or transferred from glutamine from the small subunit), hydrogencarbonate and ATP and carries out an ATP-coupled ligase reaction, activating hydrogencarbonate by forming carboxy phosphate which reacts with ammonia to form carbamoyl phosphate. The chain is Carbamoyl phosphate synthase large chain from Thermotoga maritima (strain ATCC 43589 / DSM 3109 / JCM 10099 / NBRC 100826 / MSB8).